Here is a 416-residue protein sequence, read N- to C-terminus: Na(+)/H(+) antiporter NhaA (416 aa).

9 consecutive transmembrane segments (helical) span residues 18-38 (VGGA…NSPW), 59-79 (LTLA…VAGL), 97-117 (ALPI…AAVI), 127-147 (GWAI…ALTG), 167-187 (LLAI…LWLL), 265-285 (GICV…ATVF), 297-317 (VMLG…WVAI), 333-353 (MFAL…VAEL), and 363-383 (LAKA…SALL). The interval 396–416 (ALELQPDEGDASDPSEGGSLR) is disordered.

This sequence belongs to the NhaA Na(+)/H(+) (TC 2.A.33) antiporter family.

The protein resides in the cell membrane. The enzyme catalyses Na(+)(in) + 2 H(+)(out) = Na(+)(out) + 2 H(+)(in). In terms of biological role, na(+)/H(+) antiporter that extrudes sodium in exchange for external protons. This Nocardia farcinica (strain IFM 10152) protein is Na(+)/H(+) antiporter NhaA.